We begin with the raw amino-acid sequence, 214 residues long: Ribonuclease T (214 aa).

The 176-residue stretch at 20–195 folds into the Exonuclease domain; the sequence is VVVDVETAGF…YDTQQTAELF (176 aa). D23, E25, H182, and D187 together coordinate Mg(2+). The active-site Proton donor/acceptor is H182.

Belongs to the RNase T family. In terms of assembly, homodimer. It depends on Mg(2+) as a cofactor.

In terms of biological role, trims short 3' overhangs of a variety of RNA species, leaving a one or two nucleotide 3' overhang. Responsible for the end-turnover of tRNA: specifically removes the terminal AMP residue from uncharged tRNA (tRNA-C-C-A). Also appears to be involved in tRNA biosynthesis. In Vibrio campbellii (strain ATCC BAA-1116), this protein is Ribonuclease T.